Reading from the N-terminus, the 372-residue chain is Putative F-box/kelch-repeat protein At3g22730 (372 aa).

An F-box domain is found at 1–50; it reads MMMSDLSLDLVEEILSRVPATSLKRLRSTCKLWNALFKNPGFTKKQFLKA. Kelch repeat units lie at residues 155-204, 245-293, and 324-372; these read ILRC…SFKG, ALSV…PIRG, and KVYI…IIKE.

The chain is Putative F-box/kelch-repeat protein At3g22730 from Arabidopsis thaliana (Mouse-ear cress).